Here is a 384-residue protein sequence, read N- to C-terminus: 1-deoxy-D-xylulose 5-phosphate reductoisomerase (384 aa).

NADPH contacts are provided by Thr-10, Gly-11, Ser-12, Ile-13, Lys-37, and Asn-124. Lys-125 is a binding site for 1-deoxy-D-xylulose 5-phosphate. Position 126 (Glu-126) interacts with NADPH. Asp-150 provides a ligand contact to Mn(2+). 1-deoxy-D-xylulose 5-phosphate is bound by residues Ser-151, Glu-152, Ser-176, and His-199. Mn(2+) is bound at residue Glu-152. Gly-205 lines the NADPH pocket. Ser-212, Asn-217, Lys-218, and Glu-221 together coordinate 1-deoxy-D-xylulose 5-phosphate. A Mn(2+)-binding site is contributed by Glu-221.

Belongs to the DXR family. Mg(2+) is required as a cofactor. It depends on Mn(2+) as a cofactor.

It catalyses the reaction 2-C-methyl-D-erythritol 4-phosphate + NADP(+) = 1-deoxy-D-xylulose 5-phosphate + NADPH + H(+). Its pathway is isoprenoid biosynthesis; isopentenyl diphosphate biosynthesis via DXP pathway; isopentenyl diphosphate from 1-deoxy-D-xylulose 5-phosphate: step 1/6. In terms of biological role, catalyzes the NADPH-dependent rearrangement and reduction of 1-deoxy-D-xylulose-5-phosphate (DXP) to 2-C-methyl-D-erythritol 4-phosphate (MEP). The sequence is that of 1-deoxy-D-xylulose 5-phosphate reductoisomerase from Clostridium tetani (strain Massachusetts / E88).